Consider the following 177-residue polypeptide: R-phycoerythrin beta chain (177 aa).

C50 and C61 together coordinate phycourobilin. N72 carries the N4-methylasparagine modification. Residues C82 and C158 each contribute to the (2R,3E)-phycoerythrobilin site.

It belongs to the phycobiliprotein family. In terms of assembly, heterodimer of an alpha and a beta chain. Contains two covalently linked phycoerythrobilin chromophores and one covalently linked phycourobilin chromophore.

The protein localises to the plastid. It localises to the chloroplast thylakoid membrane. Functionally, light-harvesting photosynthetic bile pigment-protein from the phycobiliprotein complex. This Pyropia yezoensis (Susabi-nori) protein is R-phycoerythrin beta chain (cpeB).